The following is a 308-amino-acid chain: Olfactory receptor 13H1 (308 aa).

Residues 1–25 are Extracellular-facing; the sequence is MAMDNVTAVFQFLLIGISNYPQWRD. Asparagine 5 is a glycosylation site (N-linked (GlcNAc...) asparagine). The helical transmembrane segment at 26-46 threads the bilayer; it reads TFFTLVLIIYLSTLLGNGFMI. Residues 47-54 are Cytoplasmic-facing; it reads FLIHFDPN. Residues 55–75 traverse the membrane as a helical segment; that stretch reads LHTPIYFFLSNLSFLDLCYGT. Residues 76–99 lie on the Extracellular side of the membrane; the sequence is ASMPQALVHCFSTHPYLSYPRCLA. Cysteines 97 and 188 form a disulfide. Residues 100–120 traverse the membrane as a helical segment; sequence QTSVSLALATAECLLLAAMAY. Residues 121–139 lie on the Cytoplasmic side of the membrane; that stretch reads DRVVAISNPLRYSVVMNGP. Residues 140–159 traverse the membrane as a helical segment; sequence VCVCLVATSWGTSLVLTAML. Residues 160–196 are Extracellular-facing; it reads ILSLRLHFCGANVINHFACEILSLIKLTCSDTSLNEF. A helical transmembrane segment spans residues 197–216; sequence MILITSIFTLLLPFGFVLLS. Over 217 to 236 the chain is Cytoplasmic; sequence YIRIAMAIIRIRSLQGRLKA. The chain crosses the membrane as a helical span at residues 237–257; the sequence is FTTCGSHLTVVTIFYGSAISM. Topologically, residues 258-270 are extracellular; sequence YMKTQSKSYPDQD. Residues 271 to 291 form a helical membrane-spanning segment; it reads KFISVFYGALTPMLNPLIYSL. Over 292–308 the chain is Cytoplasmic; that stretch reads RKKDVKRAIRKVMLKRT.

Belongs to the G-protein coupled receptor 1 family.

The protein resides in the cell membrane. Functionally, odorant receptor. This is Olfactory receptor 13H1 (OR13H1) from Homo sapiens (Human).